The chain runs to 420 residues: Putative epoxide hydrolase (420 aa).

Belongs to the peptidase S33 family.

It functions in the pathway mycotoxin biosynthesis. Functionally, putative epoxide hydrolase; part of the fragmented gene cluster that mediates the biosynthesis of dothistromin (DOTH), a polyketide toxin very similar in structure to the aflatoxin precursor, versicolorin B. The first step of the pathway is the conversion of acetate to norsolorinic acid (NOR) and requires the fatty acid synthase subunits hexA and hexB, as well as the polyketide synthase pksA. PksA combines a hexanoyl starter unit and 7 malonyl-CoA extender units to synthesize the precursor NOR. The hexanoyl starter unit is provided to the acyl-carrier protein (ACP) domain by the fungal fatty acid synthase hexA/hexB. The second step is the conversion of NOR to averantin (AVN) and requires the norsolorinic acid ketoreductase nor1, which catalyzes the dehydration of norsolorinic acid to form (1'S)-averantin. The cytochrome P450 monooxygenase avnA then catalyzes the hydroxylation of AVN to 5'hydroxyaverantin (HAVN). The next step is performed by adhA that transforms HAVN to averufin (AVF). Averufin might then be converted to hydroxyversicolorone by cypX and avfA. Hydroxyversicolorone is further converted versiconal hemiacetal acetate (VHA) by moxY. VHA is then the substrate for the versiconal hemiacetal acetate esterase est1 to yield versiconal (VAL). Versicolorin B synthase vbsA then converts VAL to versicolorin B (VERB) by closing the bisfuran ring. Then, the activity of the versicolorin B desaturase verB leads to versicolorin A (VERA). DotB, a predicted chloroperoxidase, may perform epoxidation of the A-ring of VERA. Alternatively, a cytochrome P450, such as cypX or avnA could catalyze this step. It is also possible that another, uncharacterized, cytochrome P450 enzyme is responsible for this step. Opening of the epoxide could potentially be achieved by the epoxide hydrolase epoA. However, epoA seems not to be required for DOTH biosynthesis, but other epoxide hydrolases may have the ability to complement this hydrolysis. Alternatively, opening of the epoxide ring could be achieved non-enzymatically. The next step is the deoxygenation of ring A to yield the 5,8-dihydroxyanthraquinone which is most likely catalyzed by the NADPH dehydrogenase encoded by ver1. The last stages of DOTH biosynthesis are proposed to involve hydroxylation of the bisfuran. OrdB and norB might have oxidative roles here. An alternative possibility is that cytochrome P450 monoogenases such as avnA and cypX might perform these steps in addition to previously proposed steps. In Dothistroma septosporum (Red band needle blight fungus), this protein is Putative epoxide hydrolase.